A 209-amino-acid polypeptide reads, in one-letter code: Uracil phosphoribosyltransferase (209 aa).

5-phospho-alpha-D-ribose 1-diphosphate-binding positions include Arg79, Arg104, and 131 to 139 (DPMLATGAS). Residues Ile194 and 199–201 (GDA) contribute to the uracil site. Position 200 (Asp200) interacts with 5-phospho-alpha-D-ribose 1-diphosphate.

Belongs to the UPRTase family. Mg(2+) serves as cofactor.

It catalyses the reaction UMP + diphosphate = 5-phospho-alpha-D-ribose 1-diphosphate + uracil. The protein operates within pyrimidine metabolism; UMP biosynthesis via salvage pathway; UMP from uracil: step 1/1. Allosterically activated by GTP. Catalyzes the conversion of uracil and 5-phospho-alpha-D-ribose 1-diphosphate (PRPP) to UMP and diphosphate. The polypeptide is Uracil phosphoribosyltransferase (Staphylococcus aureus (strain JH1)).